Reading from the N-terminus, the 345-residue chain is MDYKSAGVDVEAGRAFVQRIKASVEATHRPEVIGGLGGFGGLMSLPAGMRKPLLVSGTDGVGTKLELAQEHGSHHGVGIDLVAMCVNDVITSGAAPLFFLDYMATGALAPSAMAEVVEGIADGCRQSGCALLGGETAEMPGFYPQGRYDIAGFCVAVVEEDELIDGQRIQPGDSVIGVASSGVHSNGFSLVRKVLEKANADANTVYGDNQRPLIGDLLAPTTLYADLVQHLMQSGCELHGMAHITGGGLPENLPRCLPEGCSARIDASSWTRPTLFRWLQEAGNIPERDLWHTFNLGIGFCLVVPARSEDAVIEHCRGKNHQAWLIGNVTSNTPGNAAVLEGVPA.

It belongs to the AIR synthase family.

The protein resides in the cytoplasm. It catalyses the reaction 2-formamido-N(1)-(5-O-phospho-beta-D-ribosyl)acetamidine + ATP = 5-amino-1-(5-phospho-beta-D-ribosyl)imidazole + ADP + phosphate + H(+). It participates in purine metabolism; IMP biosynthesis via de novo pathway; 5-amino-1-(5-phospho-D-ribosyl)imidazole from N(2)-formyl-N(1)-(5-phospho-D-ribosyl)glycinamide: step 2/2. This Synechococcus sp. (strain CC9605) protein is Phosphoribosylformylglycinamidine cyclo-ligase.